The chain runs to 1266 residues: 5-oxoprolinase 1 (1266 aa).

It belongs to the oxoprolinase family. As to expression, expressed in roots, stems, leaves, flowers and siliques.

The protein resides in the cytoplasm. The catalysed reaction is 5-oxo-L-proline + ATP + 2 H2O = L-glutamate + ADP + phosphate + H(+). In terms of biological role, catalyzes the cleavage of 5-oxo-L-proline to form L-glutamate coupled to the hydrolysis of ATP to ADP and inorganic phosphate. Acts in the glutathione degradation pathway. The sequence is that of 5-oxoprolinase 1 from Arabidopsis thaliana (Mouse-ear cress).